Here is a 634-residue protein sequence, read N- to C-terminus: 1-deoxy-D-xylulose-5-phosphate synthase (634 aa).

Thiamine diphosphate contacts are provided by residues histidine 74 and alanine 115 to serine 117. Position 146 (aspartate 146) interacts with Mg(2+). Thiamine diphosphate contacts are provided by residues glycine 147–alanine 148, asparagine 176, tyrosine 283, and glutamate 365. Residue asparagine 176 coordinates Mg(2+).

It belongs to the transketolase family. DXPS subfamily. Homodimer. Mg(2+) serves as cofactor. Thiamine diphosphate is required as a cofactor.

It catalyses the reaction D-glyceraldehyde 3-phosphate + pyruvate + H(+) = 1-deoxy-D-xylulose 5-phosphate + CO2. It functions in the pathway metabolic intermediate biosynthesis; 1-deoxy-D-xylulose 5-phosphate biosynthesis; 1-deoxy-D-xylulose 5-phosphate from D-glyceraldehyde 3-phosphate and pyruvate: step 1/1. In terms of biological role, catalyzes the acyloin condensation reaction between C atoms 2 and 3 of pyruvate and glyceraldehyde 3-phosphate to yield 1-deoxy-D-xylulose-5-phosphate (DXP). The chain is 1-deoxy-D-xylulose-5-phosphate synthase from Burkholderia orbicola (strain MC0-3).